A 271-amino-acid chain; its full sequence is Tryptophan synthase alpha chain (271 aa).

Catalysis depends on proton acceptor residues Glu49 and Asp60.

Belongs to the TrpA family. Tetramer of two alpha and two beta chains.

The catalysed reaction is (1S,2R)-1-C-(indol-3-yl)glycerol 3-phosphate + L-serine = D-glyceraldehyde 3-phosphate + L-tryptophan + H2O. It participates in amino-acid biosynthesis; L-tryptophan biosynthesis; L-tryptophan from chorismate: step 5/5. Its function is as follows. The alpha subunit is responsible for the aldol cleavage of indoleglycerol phosphate to indole and glyceraldehyde 3-phosphate. This chain is Tryptophan synthase alpha chain, found in Buchnera aphidicola subsp. Schizaphis graminum (strain Sg).